Consider the following 225-residue polypeptide: Chromosome partition protein MukE (225 aa).

The tract at residues 197–225 is disordered; the sequence is RDGEAMPIENHLQLNDETEENQPDSGEEE. A compositionally biased stretch (acidic residues) spans 212–225; that stretch reads DETEENQPDSGEEE.

This sequence belongs to the MukE family. Interacts, and probably forms a ternary complex, with MukF and MukB. The complex formation is stimulated by calcium or magnesium.

The protein localises to the cytoplasm. Its subcellular location is the nucleoid. Involved in chromosome condensation, segregation and cell cycle progression. May participate in facilitating chromosome segregation by condensation DNA from both sides of a centrally located replisome during cell division. Probably acts via its interaction with MukB and MukF. In Escherichia coli O157:H7, this protein is Chromosome partition protein MukE.